We begin with the raw amino-acid sequence, 223 residues long: Ribose-5-phosphate isomerase A (223 aa).

Residues 32–35 (TGST), 83–86 (DGAD), and 96–99 (KGGG) contribute to the substrate site. Glu-105 acts as the Proton acceptor in catalysis. Residue Lys-123 coordinates substrate.

The protein belongs to the ribose 5-phosphate isomerase family. As to quaternary structure, homodimer.

The enzyme catalyses aldehydo-D-ribose 5-phosphate = D-ribulose 5-phosphate. The protein operates within carbohydrate degradation; pentose phosphate pathway; D-ribose 5-phosphate from D-ribulose 5-phosphate (non-oxidative stage): step 1/1. In terms of biological role, catalyzes the reversible conversion of ribose-5-phosphate to ribulose 5-phosphate. The sequence is that of Ribose-5-phosphate isomerase A from Acinetobacter baumannii (strain ATCC 17978 / DSM 105126 / CIP 53.77 / LMG 1025 / NCDC KC755 / 5377).